Consider the following 441-residue polypeptide: Methionine aminopeptidase 2A (441 aa).

The interval Met-1–Gln-103 is disordered. Polar residues predominate over residues Ala-18 to Thr-33. Over residues Asp-37–Thr-62 the composition is skewed to basic and acidic residues. Positions Lys-63–Ser-76 are enriched in basic residues. His-194 lines the substrate pocket. Residues Asp-214, Asp-225, and His-294 each contribute to the a divalent metal cation site. His-302 is a substrate binding site. A divalent metal cation is bound by residues Glu-327 and Glu-422.

Belongs to the peptidase M24A family. Methionine aminopeptidase eukaryotic type 2 subfamily. Co(2+) is required as a cofactor. The cofactor is Zn(2+). It depends on Mn(2+) as a cofactor. Fe(2+) serves as cofactor. As to expression, ubiquitous. Preferentially expressed in roots.

It is found in the cytoplasm. It carries out the reaction Release of N-terminal amino acids, preferentially methionine, from peptides and arylamides.. Cotranslationally removes the N-terminal methionine from nascent proteins. The N-terminal methionine is often cleaved when the second residue in the primary sequence is small and uncharged (Met-Ala-, Cys, Gly, Pro, Ser, Thr, or Val). The protein is Methionine aminopeptidase 2A of Arabidopsis thaliana (Mouse-ear cress).